The chain runs to 921 residues: TRPM8 channel-associated factor 1 (921 aa).

Positions 542–841 (YCWMSTGLYI…TYLQLQEAFG (300 aa)) constitute a Peptidase M60 domain.

It belongs to the TCAF family. As to quaternary structure, interacts with TRPM8 (via N-terminus and C-terminus domains); the interaction inhibits TRPM8 channel activity. Interacts with TRPV6.

Its subcellular location is the cell membrane. In terms of biological role, positively regulates the plasma membrane cation channel TRPM8 activity. Involved in the recruitment of TRPM8 to the cell surface. Promotes prostate cancer cell migration inhibition in a TRPM8-dependent manner. The chain is TRPM8 channel-associated factor 1 from Pongo abelii (Sumatran orangutan).